Reading from the N-terminus, the 143-residue chain is Transcriptional regulator MraZ (143 aa).

2 consecutive SpoVT-AbrB domains span residues 5-47 (EYQH…SLEE) and 76-119 (AAEV…DKSK).

Belongs to the MraZ family. As to quaternary structure, forms oligomers.

It is found in the cytoplasm. The protein resides in the nucleoid. This chain is Transcriptional regulator MraZ, found in Acetivibrio thermocellus (strain ATCC 27405 / DSM 1237 / JCM 9322 / NBRC 103400 / NCIMB 10682 / NRRL B-4536 / VPI 7372) (Clostridium thermocellum).